A 354-amino-acid polypeptide reads, in one-letter code: Hyaluronan and proteoglycan link protein 1 (354 aa).

Positions 1 to 15 (MKSLLLLVLISFCWA) are excised as a propeptide. N-linked (GlcNAc...) asparagine glycans are attached at residues Asn21 and Asn56. In terms of domain architecture, Ig-like V-type spans 38 to 152 (PRLLVEAEQA…EGLEDDTAVV (115 aa)). 5 disulfides stabilise this stretch: Cys61-Cys139, Cys181-Cys252, Cys205-Cys226, Cys279-Cys349, and Cys304-Cys325. Link domains lie at 159 to 254 (VVFP…FCFT) and 259 to 351 (GRFY…YCFR).

This sequence belongs to the HAPLN family.

The protein resides in the secreted. It localises to the extracellular space. Its subcellular location is the extracellular matrix. Its function is as follows. Stabilizes the aggregates of proteoglycan monomers with hyaluronic acid in the extracellular cartilage matrix. The chain is Hyaluronan and proteoglycan link protein 1 (HAPLN1) from Bos taurus (Bovine).